The primary structure comprises 514 residues: 2,3-bisphosphoglycerate-independent phosphoglycerate mutase (514 aa).

Positions 14 and 64 each coordinate Mn(2+). Catalysis depends on Ser-64, which acts as the Phosphoserine intermediate. Substrate contacts are provided by residues His-125, 155-156 (RD), Arg-187, Arg-193, 263-266 (RADR), and Lys-336. Positions 403, 407, 444, 445, and 463 each coordinate Mn(2+).

Belongs to the BPG-independent phosphoglycerate mutase family. In terms of assembly, monomer. Requires Mn(2+) as cofactor.

The catalysed reaction is (2R)-2-phosphoglycerate = (2R)-3-phosphoglycerate. The protein operates within carbohydrate degradation; glycolysis; pyruvate from D-glyceraldehyde 3-phosphate: step 3/5. Its function is as follows. Catalyzes the interconversion of 2-phosphoglycerate and 3-phosphoglycerate. In Shewanella sp. (strain ANA-3), this protein is 2,3-bisphosphoglycerate-independent phosphoglycerate mutase.